The sequence spans 381 residues: Probable G-protein coupled receptor 34 (381 aa).

Residues 1-61 (MRSHTITMTT…LLSTVLTTSY (61 aa)) lie on the Extracellular side of the membrane. Residues Asn-28, Asn-36, and Asn-42 are each glycosylated (N-linked (GlcNAc...) asparagine). The helical transmembrane segment at 62–82 (SVIFIVGLVGNIIALYVFLGI) threads the bilayer. Residues 83–88 (HRKRNS) are Cytoplasmic-facing. A helical transmembrane segment spans residues 89-109 (IQIYLLNVAIADLLLIFCLPF). Topologically, residues 110–128 (RIMYHINQNKWTLGVILCK) are extracellular. Residues Cys-127 and Cys-204 are joined by a disulfide bond. The chain crosses the membrane as a helical span at residues 129–149 (VVGTLFYMNMYISIILLGFIS). Residues 150 to 171 (LDRYIKINRSIQQRKAITTKQS) are Cytoplasmic-facing. A helical transmembrane segment spans residues 172–192 (IYVCCIVWMLALGGFLTMIIL). At 193-216 (TLKKGGHNSTMCFHYRDKHNAKGE) the chain is on the extracellular side. The N-linked (GlcNAc...) asparagine glycan is linked to Asn-200. The helical transmembrane segment at 217–237 (AIFNFILVVMFWLIFLLIILS) threads the bilayer. At 238 to 269 (YIKIGKNLLRISKRRSKFPNSGKYATTARNSF) the chain is on the cytoplasmic side. Residues 270-290 (IVLIIFTICFVPYHAFRFIYI) form a helical membrane-spanning segment. Residues 291–310 (SSQLNVSSCYWKEIVHKTNE) lie on the Extracellular side of the membrane. Residue Asn-295 is glycosylated (N-linked (GlcNAc...) asparagine). A helical transmembrane segment spans residues 311-331 (IMLVLSSFNSCLDPVMYFLMS). Residues 332–381 (SNIRKIMCQLLFRRFQGEPSRSESTSEFKPGYSLHDTSVAVKIQSSSKST) are Cytoplasmic-facing.

Belongs to the G-protein coupled receptor 1 family.

It localises to the cell membrane. In terms of biological role, G-protein-coupled receptor of lysophosphatidylserine (LysoPS) that plays different roles in immune response. Acts a damage-sensing receptor that triggers tissue repair upon recognition of dying neutrophils. Mechanistically, apoptotic neutrophils release lysophosphatydilserine that are recognized by type 3 innate lymphoid cells (ILC3s) via GPR34, which activates downstream PI3K-AKT and RAS-ERK signaling pathways leading to STAT3 activation and IL-22 production. Plays an important role in microglial function, controlling morphology and phagocytosis. The protein is Probable G-protein coupled receptor 34 (GPR34) of Gorilla gorilla gorilla (Western lowland gorilla).